A 638-amino-acid polypeptide reads, in one-letter code: 1-deoxy-D-xylulose-5-phosphate synthase (638 aa).

Thiamine diphosphate contacts are provided by residues H71 and S112 to A114. A Mg(2+)-binding site is contributed by D144. Residues G145–A146, N173, Y284, and E365 contribute to the thiamine diphosphate site. Residue N173 participates in Mg(2+) binding.

Belongs to the transketolase family. DXPS subfamily. In terms of assembly, homodimer. The cofactor is Mg(2+). Thiamine diphosphate is required as a cofactor.

It catalyses the reaction D-glyceraldehyde 3-phosphate + pyruvate + H(+) = 1-deoxy-D-xylulose 5-phosphate + CO2. Its pathway is metabolic intermediate biosynthesis; 1-deoxy-D-xylulose 5-phosphate biosynthesis; 1-deoxy-D-xylulose 5-phosphate from D-glyceraldehyde 3-phosphate and pyruvate: step 1/1. Its function is as follows. Catalyzes the acyloin condensation reaction between C atoms 2 and 3 of pyruvate and glyceraldehyde 3-phosphate to yield 1-deoxy-D-xylulose-5-phosphate (DXP). The sequence is that of 1-deoxy-D-xylulose-5-phosphate synthase from Mycobacterium bovis (strain ATCC BAA-935 / AF2122/97).